Here is a 199-residue protein sequence, read N- to C-terminus: Casparian strip membrane protein 1 (199 aa).

Over 1–37 the chain is Cytoplasmic; that stretch reads MKSESAAIDIPESSSVAKGKAPLIAVSRNEKGGYRKG. Residues 38-58 form a helical membrane-spanning segment; sequence IAIFDFILRLAAIATALAAAA. The Extracellular segment spans residues 59-87; sequence AMGTSDETLPFFTQFFQFQASYDDLPTFQ. The helical transmembrane segment at 88-108 threads the bilayer; it reads FFVIAIAIVGGYLVLSLPFSI. At 109-120 the chain is on the cytoplasmic side; that stretch reads VAIVRPHAVGPR. The helical transmembrane segment at 121–141 threads the bilayer; sequence LLLIILDAVALTLNTAAGAAA. Residues 142-173 lie on the Extracellular side of the membrane; that stretch reads AAIVYLAHNGNSNTNWLAICQQYGDFCQKVSG. The helical transmembrane segment at 174–194 threads the bilayer; it reads AVVASFITVVIFVFLIVLSAF. Over 195–199 the chain is Cytoplasmic; sequence ALRRH.

It belongs to the Casparian strip membrane proteins (CASP) family. In terms of assembly, homodimer and heterodimers.

The protein resides in the cell membrane. Functionally, regulates membrane-cell wall junctions and localized cell wall deposition. Required for establishment of the Casparian strip membrane domain (CSD) and the subsequent formation of Casparian strips, a cell wall modification of the root endodermis that determines an apoplastic barrier between the intraorganismal apoplasm and the extraorganismal apoplasm and prevents lateral diffusion. This chain is Casparian strip membrane protein 1, found in Populus trichocarpa (Western balsam poplar).